The following is a 782-amino-acid chain: E3 ubiquitin-protein ligase SopA (782 aa).

Positions 137 to 171 (VSVSANNRPTVSEGRTPPVSPSLSLQATSSPSSPA) are disordered. Residues 157 to 171 (PSLSLQATSSPSSPA) show a composition bias toward low complexity. Cys-753 serves as the catalytic Glycyl thioester intermediate.

It belongs to the SopA E3 ligase family. In terms of processing, ubiquitinated in the presence of host E1 ubiquitin-activating enzyme, E2 ubiquitin-conjugating enzyme and ubiquitin.

Its subcellular location is the secreted. The protein resides in the host cell. It carries out the reaction S-ubiquitinyl-[E2 ubiquitin-conjugating enzyme]-L-cysteine + [acceptor protein]-L-lysine = [E2 ubiquitin-conjugating enzyme]-L-cysteine + N(6)-ubiquitinyl-[acceptor protein]-L-lysine.. Functionally, effector proteins function to alter host cell physiology and promote bacterial survival in host tissues. This protein is an E3 ubiquitin ligase that interferes with host's ubiquitination pathway. For instance, prevents host innate immune response by ubiquitinating and thus sending to degradation host E3 ubiquitin ligases TRIM56 and TRIM65. The protein is E3 ubiquitin-protein ligase SopA (sopA) of Salmonella typhimurium (strain 14028s / SGSC 2262).